A 523-amino-acid polypeptide reads, in one-letter code: UDP-glucuronosyltransferase 3A2 (523 aa).

Positions 1–22 are cleaved as a signal peptide; it reads MAGQRVLLLVGFLLPGVLLSEA. Topologically, residues 23 to 483 are extracellular; sequence AKILTISTVG…YVFQQPWHEQ (461 aa). The N-linked (GlcNAc...) asparagine glycan is linked to N52. The chain crosses the membrane as a helical span at residues 484–504; it reads YLLDVFVFLLGLTLGTLWLCG. Residues 505-523 are Cytoplasmic-facing; it reads KLLGMAVWWLRGARKVKET.

The protein belongs to the UDP-glycosyltransferase family.

The protein localises to the membrane. It catalyses the reaction glucuronate acceptor + UDP-alpha-D-glucuronate = acceptor beta-D-glucuronoside + UDP + H(+). UDP-glucuronosyltransferases catalyze phase II biotransformation reactions in which lipophilic substrates are conjugated with glucuronic acid to increase water solubility and enhance excretion. They are of major importance in the conjugation and subsequent elimination of potentially toxic xenobiotics and endogenous compounds. This Homo sapiens (Human) protein is UDP-glucuronosyltransferase 3A2 (UGT3A2).